The sequence spans 173 residues: NADH-ubiquinone oxidoreductase chain 6 (173 aa).

5 helical membrane-spanning segments follow: residues 1–21 (MTYF…AVAS), 27–47 (YGVV…LSLG), 48–68 (VSFV…VVFV), 87–107 (VVGY…VGGL), and 139–159 (CGVG…FVVL).

This sequence belongs to the complex I subunit 6 family.

The protein localises to the mitochondrion membrane. It carries out the reaction a ubiquinone + NADH + 5 H(+)(in) = a ubiquinol + NAD(+) + 4 H(+)(out). Core subunit of the mitochondrial membrane respiratory chain NADH dehydrogenase (Complex I) that is believed to belong to the minimal assembly required for catalysis. Complex I functions in the transfer of electrons from NADH to the respiratory chain. The immediate electron acceptor for the enzyme is believed to be ubiquinone. The sequence is that of NADH-ubiquinone oxidoreductase chain 6 (MT-ND6) from Synthliboramphus wumizusume (Japanese murrelet).